The sequence spans 450 residues: Methylenetetrahydrofolate--tRNA-(uracil-5-)-methyltransferase TrmFO (450 aa).

10 to 15 (GGGLAG) serves as a coordination point for FAD.

It belongs to the MnmG family. TrmFO subfamily. Requires FAD as cofactor.

It is found in the cytoplasm. The catalysed reaction is uridine(54) in tRNA + (6R)-5,10-methylene-5,6,7,8-tetrahydrofolate + NADH + H(+) = 5-methyluridine(54) in tRNA + (6S)-5,6,7,8-tetrahydrofolate + NAD(+). The enzyme catalyses uridine(54) in tRNA + (6R)-5,10-methylene-5,6,7,8-tetrahydrofolate + NADPH + H(+) = 5-methyluridine(54) in tRNA + (6S)-5,6,7,8-tetrahydrofolate + NADP(+). Functionally, catalyzes the folate-dependent formation of 5-methyl-uridine at position 54 (M-5-U54) in all tRNAs. This chain is Methylenetetrahydrofolate--tRNA-(uracil-5-)-methyltransferase TrmFO, found in Anaeromyxobacter dehalogenans (strain 2CP-C).